The chain runs to 82 residues: ATP synthase subunit c, chloroplastic (82 aa).

Helical transmembrane passes span 7-27 (AASV…PGIG) and 57-77 (LAFM…LLFA).

It belongs to the ATPase C chain family. In terms of assembly, F-type ATPases have 2 components, F(1) - the catalytic core - and F(0) - the membrane proton channel. F(1) has five subunits: alpha(3), beta(3), gamma(1), delta(1), epsilon(1). F(0) has four main subunits: a(1), b(1), b'(1) and c(10-14). The alpha and beta chains form an alternating ring which encloses part of the gamma chain. F(1) is attached to F(0) by a central stalk formed by the gamma and epsilon chains, while a peripheral stalk is formed by the delta, b and b' chains.

It localises to the plastid. The protein localises to the chloroplast thylakoid membrane. Functionally, f(1)F(0) ATP synthase produces ATP from ADP in the presence of a proton or sodium gradient. F-type ATPases consist of two structural domains, F(1) containing the extramembraneous catalytic core and F(0) containing the membrane proton channel, linked together by a central stalk and a peripheral stalk. During catalysis, ATP synthesis in the catalytic domain of F(1) is coupled via a rotary mechanism of the central stalk subunits to proton translocation. In terms of biological role, key component of the F(0) channel; it plays a direct role in translocation across the membrane. A homomeric c-ring of between 10-14 subunits forms the central stalk rotor element with the F(1) delta and epsilon subunits. The chain is ATP synthase subunit c, chloroplastic from Porphyra purpurea (Red seaweed).